The chain runs to 351 residues: Glycerol-1-phosphate dehydrogenase [NAD(P)+] (351 aa).

NAD(+) contacts are provided by residues 97–101 and 119–122; these read GKVID and TSPS. Asp-124 is a substrate binding site. Ser-128 lines the NAD(+) pocket. Residue Asp-171 coordinates substrate. Residues Asp-171 and His-251 each coordinate Zn(2+). His-255 contacts substrate. His-267 lines the Zn(2+) pocket.

It belongs to the glycerol-1-phosphate dehydrogenase family. Homodimer. Zn(2+) is required as a cofactor.

The protein resides in the cytoplasm. The enzyme catalyses sn-glycerol 1-phosphate + NAD(+) = dihydroxyacetone phosphate + NADH + H(+). The catalysed reaction is sn-glycerol 1-phosphate + NADP(+) = dihydroxyacetone phosphate + NADPH + H(+). It participates in membrane lipid metabolism; glycerophospholipid metabolism. Catalyzes the NAD(P)H-dependent reduction of dihydroxyacetonephosphate (DHAP or glycerone phosphate) to glycerol 1-phosphate (G1P). The G1P thus generated is used as the glycerophosphate backbone of phospholipids in the cellular membranes of Archaea. This is Glycerol-1-phosphate dehydrogenase [NAD(P)+] from Saccharolobus islandicus (strain M.16.27) (Sulfolobus islandicus).